The sequence spans 68 residues: UPF0253 protein VFMJ11_0680 (68 aa).

This sequence belongs to the UPF0253 family.

The sequence is that of UPF0253 protein VFMJ11_0680 from Aliivibrio fischeri (strain MJ11) (Vibrio fischeri).